Here is a 169-residue protein sequence, read N- to C-terminus: MMTLIIPRKEAPVSGEGTVVIPQPAGDEPVIKNTFFFPDIDPKRVRERMRLEQTVAPARLREAIKSGMAETNAELYEYREQKIAAGFTRLADVPADDIDGESIKVFYYERAVCAMATASLYERYRGVDASAKGDKKADSIDSTIDELWRDMRWAVARIQGKPRCIVSQI.

To phage HP1 protein ORF20.

Its function is as follows. Carries out the completion of filled heads by rendering the newly packaged DNA in filled heads resistant to DNase. The protein is assumed to bind to DNA-filled capsids. The sequence is that of Head completion/stabilization protein (L) from Enterobacteriaceae (Bacteriophage P2).